Reading from the N-terminus, the 276-residue chain is Glutamate 5-kinase (276 aa).

Lys-14 contacts ATP. Substrate-binding residues include Ser-54, Asp-141, and Asn-157. ATP-binding positions include 177 to 178 (SD) and 219 to 225 (TGGMLTK).

It belongs to the glutamate 5-kinase family.

It localises to the cytoplasm. It carries out the reaction L-glutamate + ATP = L-glutamyl 5-phosphate + ADP. The protein operates within amino-acid biosynthesis; L-proline biosynthesis; L-glutamate 5-semialdehyde from L-glutamate: step 1/2. In terms of biological role, catalyzes the transfer of a phosphate group to glutamate to form L-glutamate 5-phosphate. The polypeptide is Glutamate 5-kinase (Listeria innocua serovar 6a (strain ATCC BAA-680 / CLIP 11262)).